Reading from the N-terminus, the 249-residue chain is Phosphate import ATP-binding protein PstB (249 aa).

An ABC transporter domain is found at 4–244 (IQTKDLNLYY…PKDKRTEDYI (241 aa)). 36–43 (GPSGCGKS) serves as a coordination point for ATP.

The protein belongs to the ABC transporter superfamily. Phosphate importer (TC 3.A.1.7) family. In terms of assembly, the complex is composed of two ATP-binding proteins (PstB), two transmembrane proteins (PstC and PstA) and a solute-binding protein (PstS).

The protein resides in the cell membrane. It carries out the reaction phosphate(out) + ATP + H2O = ADP + 2 phosphate(in) + H(+). Part of the ABC transporter complex PstSACB involved in phosphate import. Responsible for energy coupling to the transport system. In Clostridium acetobutylicum (strain ATCC 824 / DSM 792 / JCM 1419 / IAM 19013 / LMG 5710 / NBRC 13948 / NRRL B-527 / VKM B-1787 / 2291 / W), this protein is Phosphate import ATP-binding protein PstB.